The primary structure comprises 81 residues: ATP synthase subunit c (81 aa).

Helical transmembrane passes span 7–27 and 57–77; these read AASV…PGIG and LAFM…LLFA.

The protein belongs to the ATPase C chain family. F-type ATPases have 2 components, F(1) - the catalytic core - and F(0) - the membrane proton channel. F(1) has five subunits: alpha(3), beta(3), gamma(1), delta(1), epsilon(1). F(0) has four main subunits: a(1), b(1), b'(1) and c(10-14). The alpha and beta chains form an alternating ring which encloses part of the gamma chain. F(1) is attached to F(0) by a central stalk formed by the gamma and epsilon chains, while a peripheral stalk is formed by the delta, b and b' chains.

The protein localises to the cellular thylakoid membrane. Its function is as follows. F(1)F(0) ATP synthase produces ATP from ADP in the presence of a proton or sodium gradient. F-type ATPases consist of two structural domains, F(1) containing the extramembraneous catalytic core and F(0) containing the membrane proton channel, linked together by a central stalk and a peripheral stalk. During catalysis, ATP synthesis in the catalytic domain of F(1) is coupled via a rotary mechanism of the central stalk subunits to proton translocation. Functionally, key component of the F(0) channel; it plays a direct role in translocation across the membrane. A homomeric c-ring of between 10-14 subunits forms the central stalk rotor element with the F(1) delta and epsilon subunits. The protein is ATP synthase subunit c of Synechococcus elongatus (strain ATCC 33912 / PCC 7942 / FACHB-805) (Anacystis nidulans R2).